Consider the following 340-residue polypeptide: Uroporphyrinogen decarboxylase (340 aa).

Substrate contacts are provided by residues 21 to 25 (RQAGR), aspartate 71, tyrosine 148, serine 203, and histidine 316.

This sequence belongs to the uroporphyrinogen decarboxylase family. As to quaternary structure, homodimer.

The protein resides in the cytoplasm. The catalysed reaction is uroporphyrinogen III + 4 H(+) = coproporphyrinogen III + 4 CO2. The protein operates within porphyrin-containing compound metabolism; protoporphyrin-IX biosynthesis; coproporphyrinogen-III from 5-aminolevulinate: step 4/4. Functionally, catalyzes the decarboxylation of four acetate groups of uroporphyrinogen-III to yield coproporphyrinogen-III. This chain is Uroporphyrinogen decarboxylase, found in Campylobacter jejuni subsp. jejuni serotype O:6 (strain 81116 / NCTC 11828).